The chain runs to 528 residues: Protein spinster homolog 1 (528 aa).

The interval 1–38 (MAGSDTAPFLSQADDPDDGPAPGHPGLPGPMGNPKSGE) is disordered. A2 carries the N-acetylalanine modification. A run of 12 helical transmembrane segments spans residues 60–80 (LIVVVLCYINLLNYMDRFTVA), 98–118 (GLIQTVFISSYMVLAPVFGYL), 126–146 (YLMCGGIAFWSLVTLGSSFIP), 160–180 (VGVGEASYSTIAPTLIADLFV), 187–207 (MLSIFYFAIPVGSGLGYIAGS), 218–238 (WALRVTPGLGVLAVLLLFLVV), 278–298 (LGFTAVAFVTGSLALWAPAFL), 323–343 (LIFGLITCLTGVLGVGLGVEI), 357–377 (LVCAAGLLGSSPFLFLSLACA), 381–401 (IVATYIFIFIGETLLSMNWAI), 421–441 (FQIVLSHLLGDAGSPYLIGLI), and 465–485 (MLCAFVGALGGAAFLGTAMFI). Phosphoserine is present on S518.

This sequence belongs to the major facilitator superfamily. Spinster (TC 2.A.1.49) family. In terms of assembly, interacts with BCL2 and BCL2L1.

It localises to the lysosome membrane. The catalysed reaction is a 1-acyl-sn-glycero-3-phosphocholine(out) + H(+)(out) = a 1-acyl-sn-glycero-3-phosphocholine(in) + H(+)(in). It carries out the reaction 1-hexadecanoyl-sn-glycero-3-phosphocholine(out) + H(+)(out) = 1-hexadecanoyl-sn-glycero-3-phosphocholine(in) + H(+)(in). The enzyme catalyses 1-(9Z-octadecenoyl)-sn-glycero-3-phosphocholine(out) + H(+)(out) = 1-(9Z-octadecenoyl)-sn-glycero-3-phosphocholine(in) + H(+)(in). It catalyses the reaction 1-(5Z,8Z,11Z,14Z-eicosatetraenoyl)-sn-glycero-3-phosphocholine(out) + H(+)(out) = 1-(5Z,8Z,11Z,14Z-eicosatetraenoyl)-sn-glycero-3-phosphocholine(in) + H(+)(in). The catalysed reaction is 1-(4Z,7Z,10Z,13Z,16Z,19Z-docosahexaenoyl)-sn-glycero-3-phosphocholine(out) + H(+)(out) = 1-(4Z,7Z,10Z,13Z,16Z,19Z-docosahexaenoyl)-sn-glycero-3-phosphocholine(in) + H(+)(in). It carries out the reaction a 1-acyl-sn-glycero-3-phosphoethanolamine(out) + H(+)(out) = a 1-acyl-sn-glycero-3-phosphoethanolamine(in) + H(+)(in). The enzyme catalyses 1-(9Z-octadecenoyl)-sn-glycero-3-phosphoethanolamine(out) + H(+)(out) = 1-(9Z-octadecenoyl)-sn-glycero-3-phosphoethanolamine(in) + H(+)(in). It catalyses the reaction 1-acyl-sn-glycero-3-phospho-(1'-sn-glycerol)(out) + H(+)(out) = 1-acyl-sn-glycero-3-phospho-(1'-sn-glycerol)(in) + H(+)(in). The catalysed reaction is 1-(9Z-octadecenoyl)-sn-glycero-3-phospho-(1'-sn-glycerol)(out) + H(+)(out) = 1-(9Z-octadecenoyl)-sn-glycero-3-phospho-(1'-sn-glycerol)(in) + H(+)(in). It carries out the reaction a 1-O-(1Z-alkenyl)-sn-glycero-3-phosphocholine(out) + H(+)(out) = a 1-O-(1Z-alkenyl)-sn-glycero-3-phosphocholine(in) + H(+)(in). The enzyme catalyses 1-(1Z-hexadecenyl)-sn-glycero-3-phosphocholine(out) + H(+)(out) = 1-(1Z-hexadecenyl)-sn-glycero-3-phosphocholine(in) + H(+)(in). It catalyses the reaction a 1-O-(1Z-alkenyl)-sn-glycero-3-phosphoethanolamine(out) + H(+)(out) = a 1-O-(1Z-alkenyl)-sn-glycero-3-phosphoethanolamine(in) + H(+)(in). The catalysed reaction is 1-O-(1Z-hexadecenyl)-sn-glycero-3-phosphoethanolamine(out) + H(+)(out) = 1-O-(1Z-hexadecenyl)-sn-glycero-3-phosphoethanolamine(in) + H(+)(in). Its function is as follows. Plays a critical role in the phospholipid salvage pathway from lysosomes to the cytosol. Mediates the rate-limiting, proton-dependent, lysosomal efflux of lysophospholipids, which can then be reacylated by acyltransferases in the endoplasmic reticulum to form phospholipids. Selective for zwitterionic headgroups such as lysophosphatidylcholine (LPC) and lysophosphatidylethanolamine (LPE), can also transport lysophosphatidylglycerol (LPG), but not other anionic lysophospholipids, sphingosine, nor sphingomyelin. Transports lysophospholipids with saturated, monounsaturated, and polyunsaturated fatty acids, such as 1-hexadecanoyl-sn-glycero-3-phosphocholine, 1-(9Z-octadecenoyl)-sn-glycero-3-phosphocholine and 1-(4Z,7Z,10Z,13Z,16Z,19Z-docosahexaenoyl)-sn-glycero-3-phosphocholine, respectively. Can also transport lysoplasmalogen (LPC with a fatty alcohol) such as 1-(1Z-hexadecenyl)-sn-glycero-3-phosphocholine. Essential player in lysosomal homeostasis. Crucial for cell survival under conditions of nutrient limitation. May be involved in necrotic or autophagic cell death. This chain is Protein spinster homolog 1 (Spns1), found in Rattus norvegicus (Rat).